Consider the following 578-residue polypeptide: Glycosyltransferase family 92 protein RCOM_0530710 (578 aa).

The chain crosses the membrane as a helical span at residues 21–43 (SFFSVRSLTACLSFFVFLLFISS). The 237-residue stretch at 295-531 (YELCACTMLW…QNQGSKDRAP (237 aa)) folds into the GT92 domain.

It belongs to the glycosyltransferase 92 family.

It is found in the membrane. The protein is Glycosyltransferase family 92 protein RCOM_0530710 of Ricinus communis (Castor bean).